A 283-amino-acid chain; its full sequence is Para-Rep C10 (283 aa).

Residues 3–96 enclose the CRESS-DNA virus Rep endonuclease domain; it reads SIRAIHWCFT…IDGPWEYGTW (94 aa). The RCR-1 motif lies at 10–13; that stretch reads CFTL. The a divalent metal cation site is built by glutamate 36 and histidine 42. Positions 42–44 match the RCR-2 motif; the sequence is HLQ. The short motif at 51–71 is the Nuclear localization signal element; the sequence is KQTTLKKMKELLPGAHLEMAR. Tyrosine 79 functions as the For DNA cleavage activity in the catalytic mechanism. The RCR-3 signature appears at 79–82; it reads YCQK. Glutamate 84 lines the a divalent metal cation pocket. Residues 96–102 carry the Nuclear localization signal motif; it reads WISTGSH. Residue 172–180 coordinates ATP; sequence GPHGGEGKS.

The protein belongs to the nanoviridea/circoviridae replication-associated protein family. As to quaternary structure, homooligomer (Potential). Rep binds to repeated DNA motifs (iterons). Mg(2+) is required as a cofactor. It depends on Mn(2+) as a cofactor.

The protein resides in the host nucleus. It catalyses the reaction ATP + H2O = ADP + phosphate + H(+). In terms of biological role, initiates and terminates the replication only of its own subviral DNA molecule. The closed circular ssDNA genome is first converted to a superhelical dsDNA. Rep binds a specific hairpin at the genome origin of replication. Introduces an endonucleolytic nick within the intergenic region of the genome, thereby initiating the rolling circle replication (RCR). Following cleavage, binds covalently to the 5'-phosphate of DNA as a tyrosyl ester. The cleavage gives rise to a free 3'-OH that serves as a primer for the cellular DNA polymerase. The polymerase synthesizes the (+) strand DNA by rolling circle mechanism. After one round of replication, a Rep-catalyzed nucleotidyl transfer reaction releases a circular single-stranded virus genome, thereby terminating the replication. Displays origin-specific DNA cleavage, nucleotidyl transferase, ATPase and helicase activities. The protein is Para-Rep C10 (C10) of Milk vetch dwarf C10 alphasatellite (MVDC10A).